The sequence spans 791 residues: KN motif and ankyrin repeat domain-containing protein 3 (791 aa).

Disordered regions lie at residues Met1–Thr37, Arg56–Gln181, Ala254–Glu312, Gly401–Met425, and Tyr463–Glu514. The span at Ser25 to Ser34 shows a compositional bias: polar residues. The segment covering Leu105–Arg125 has biased composition (low complexity). A compositionally biased stretch (basic and acidic residues) spans Pro127–Ala149. Phosphoserine occurs at positions 151, 159, 163, 166, 167, and 176. Over residues Arg158 to Ala180 the composition is skewed to low complexity. Residues Ala180–Gln229 are a coiled coil. 2 stretches are compositionally biased toward basic and acidic residues: residues Ala254–Glu280 and Pro293–Glu312. A Phosphoserine modification is found at Ser279. A compositionally biased stretch (polar residues) spans Gly401–Glu410. The span at Ser485–Gly496 shows a compositional bias: low complexity. Positions His505–Glu514 are enriched in basic and acidic residues. ANK repeat units lie at residues Asn606 to His636, Ala640 to Ser677, Thr679 to Val708, Asp712 to Ile742, and Glu746 to Gln775. The segment covering Ser772–Pro783 has biased composition (polar residues). A disordered region spans residues Ser772–Lys791.

In terms of biological role, may be involved in the control of cytoskeleton formation by regulating actin polymerization. The sequence is that of KN motif and ankyrin repeat domain-containing protein 3 from Mus musculus (Mouse).